Consider the following 197-residue polypeptide: Proteinase inhibitor type-2 (197 aa).

A signal peptide spans 1–24 (MAVHKVSFVAHLLVLGMFLLLVDA). A run of 3 repeats spans residues 24–80 (AKAC…DPKN), 81–140 (PNVC…DEPK), and 141–196 (SCTT…PQSA). 8 disulfide bridges follow: C27–C115, C31–C111, C39–C121, C51–C88, C54–C72, C55–C84, C61–C97, and C114–C132.

It belongs to the protease inhibitor I20 (potato type II proteinase inhibitor) family.

The chain is Proteinase inhibitor type-2 from Nicotiana tabacum (Common tobacco).